Consider the following 130-residue polypeptide: MSKISRKSRLRKGKRGVQKGIIHIQAGFNNTIITVTDVRGQVILWSSAGACGFKGTRRSTPFAAQAAAENAVRASMDRGLKQAEVMISGPGPGRDTALRAIRRSGVTLSFVRDVTPMPHNGCRPPKKRRV.

The protein belongs to the universal ribosomal protein uS11 family. As to quaternary structure, part of the 30S ribosomal subunit.

It localises to the plastid. Its subcellular location is the chloroplast. This is Small ribosomal subunit protein uS11c from Marsilea quadrifolia (European water clover).